Here is a 533-residue protein sequence, read N- to C-terminus: Lysine--tRNA ligase 1 (533 aa).

The 'HIGH' region motif lies at 26–34; that stretch reads PSGHIHIGN. The 'KMSKS' region signature appears at 272 to 276; sequence AMSSS.

Belongs to the class-I aminoacyl-tRNA synthetase family.

The protein resides in the cytoplasm. The catalysed reaction is tRNA(Lys) + L-lysine + ATP = L-lysyl-tRNA(Lys) + AMP + diphosphate. The protein is Lysine--tRNA ligase 1 of Methanosarcina acetivorans (strain ATCC 35395 / DSM 2834 / JCM 12185 / C2A).